The following is a 334-amino-acid chain: Biotin synthase (334 aa).

One can recognise a Radical SAM core domain in the interval G55 to A285. [4Fe-4S] cluster is bound by residues C73, C77, and C80. The [2Fe-2S] cluster site is built by C152, C213, and K283.

The protein belongs to the radical SAM superfamily. Biotin synthase family. In terms of assembly, homodimer. The cofactor is [4Fe-4S] cluster. Requires [2Fe-2S] cluster as cofactor.

The enzyme catalyses (4R,5S)-dethiobiotin + (sulfur carrier)-SH + 2 reduced [2Fe-2S]-[ferredoxin] + 2 S-adenosyl-L-methionine = (sulfur carrier)-H + biotin + 2 5'-deoxyadenosine + 2 L-methionine + 2 oxidized [2Fe-2S]-[ferredoxin]. It participates in cofactor biosynthesis; biotin biosynthesis; biotin from 7,8-diaminononanoate: step 2/2. Functionally, catalyzes the conversion of dethiobiotin (DTB) to biotin by the insertion of a sulfur atom into dethiobiotin via a radical-based mechanism. This chain is Biotin synthase, found in Chlorobaculum parvum (strain DSM 263 / NCIMB 8327) (Chlorobium vibrioforme subsp. thiosulfatophilum).